A 480-amino-acid chain; its full sequence is Protein nucleotidyltransferase YdiU (480 aa).

Gly84, Gly86, Arg87, Lys107, Asp119, Gly120, Arg170, and Arg177 together coordinate ATP. The active-site Proton acceptor is the Asp246. Residues Asn247 and Asp256 each coordinate Mg(2+). Residue Asp256 coordinates ATP.

It belongs to the SELO family. It depends on Mg(2+) as a cofactor. Requires Mn(2+) as cofactor.

It catalyses the reaction L-seryl-[protein] + ATP = 3-O-(5'-adenylyl)-L-seryl-[protein] + diphosphate. The enzyme catalyses L-threonyl-[protein] + ATP = 3-O-(5'-adenylyl)-L-threonyl-[protein] + diphosphate. The catalysed reaction is L-tyrosyl-[protein] + ATP = O-(5'-adenylyl)-L-tyrosyl-[protein] + diphosphate. It carries out the reaction L-histidyl-[protein] + UTP = N(tele)-(5'-uridylyl)-L-histidyl-[protein] + diphosphate. It catalyses the reaction L-seryl-[protein] + UTP = O-(5'-uridylyl)-L-seryl-[protein] + diphosphate. The enzyme catalyses L-tyrosyl-[protein] + UTP = O-(5'-uridylyl)-L-tyrosyl-[protein] + diphosphate. In terms of biological role, nucleotidyltransferase involved in the post-translational modification of proteins. It can catalyze the addition of adenosine monophosphate (AMP) or uridine monophosphate (UMP) to a protein, resulting in modifications known as AMPylation and UMPylation. This is Protein nucleotidyltransferase YdiU from Pseudoalteromonas atlantica (strain T6c / ATCC BAA-1087).